The primary structure comprises 611 residues: UvrABC system protein C (611 aa).

A GIY-YIG domain is found at 6–84 (NNPGVYRMFN…IKRSRPRFNV (79 aa)). One can recognise a UVR domain in the interval 194–229 (QSVKDHLAAAMQAASADLDFEHAAVYRDRLAALSHV).

This sequence belongs to the UvrC family. As to quaternary structure, interacts with UvrB in an incision complex.

It localises to the cytoplasm. Its function is as follows. The UvrABC repair system catalyzes the recognition and processing of DNA lesions. UvrC both incises the 5' and 3' sides of the lesion. The N-terminal half is responsible for the 3' incision and the C-terminal half is responsible for the 5' incision. The sequence is that of UvrABC system protein C from Brucella suis biovar 1 (strain 1330).